The primary structure comprises 160 residues: Nascent polypeptide-associated complex subunit beta (160 aa).

Disordered regions lie at residues G16–D36 and E118–E160. Positions T20 to K30 are enriched in basic residues. Residues G33–V98 form the NAC-A/B domain. Basic and acidic residues predominate over residues Q124 to K134. Residues D135–P145 show a composition bias toward acidic residues.

It belongs to the NAC-beta family. As to quaternary structure, part of the nascent polypeptide-associated complex (NAC), consisting of EGD2 and EGD1. NAC associates with ribosomes via EGD1.

The protein resides in the cytoplasm. It is found in the nucleus. In terms of biological role, component of the nascent polypeptide-associated complex (NAC), a dynamic component of the ribosomal exit tunnel, protecting the emerging polypeptides from interaction with other cytoplasmic proteins to ensure appropriate nascent protein targeting. The NAC complex also promotes mitochondrial protein import by enhancing productive ribosome interactions with the outer mitochondrial membrane and blocks the inappropriate interaction of ribosomes translating non-secretory nascent polypeptides with translocation sites in the membrane of the endoplasmic reticulum. EGD1 may act as a transcription factor that exert a negative effect on the expression of several genes that are transcribed by RNA polymerase II. The protein is Nascent polypeptide-associated complex subunit beta (EGD1) of Phaeosphaeria nodorum (strain SN15 / ATCC MYA-4574 / FGSC 10173) (Glume blotch fungus).